A 419-amino-acid polypeptide reads, in one-letter code: Probable pectate lyase C (419 aa).

The signal sequence occupies residues 1 to 19 (MRLTPSLISCLSLLHFTSA). Asn48, Asn164, and Asn201 each carry an N-linked (GlcNAc...) asparagine glycan. Arg204 is a catalytic residue. In terms of domain architecture, EF-hand spans 261 to 296 (NENFHAYVETNYYDSDKDGTLNGSELGVDSTNYGGM). Residues Asp274, Asp276, Asp278, and Thr280 each coordinate Ca(2+). N-linked (GlcNAc...) asparagine glycosylation is present at Asn282. Ca(2+) is bound at residue Glu285. Positions 350-395 (ALISDEADMGGAGDLDQGTTPTDTDGDGIPDDAEAELGTDPNTADS) are disordered. Positions 363 to 372 (DLDQGTTPTD) are enriched in low complexity. Positions 373 to 386 (TDGDGIPDDAEAEL) are enriched in acidic residues.

It belongs to the polysaccharide lyase 1 family. Ca(2+) is required as a cofactor.

It is found in the secreted. It carries out the reaction Eliminative cleavage of (1-&gt;4)-alpha-D-galacturonan to give oligosaccharides with 4-deoxy-alpha-D-galact-4-enuronosyl groups at their non-reducing ends.. Its function is as follows. Pectinolytic enzyme consist of four classes of enzymes: pectin lyase, polygalacturonase, pectin methylesterase and rhamnogalacturonase. Among pectinolytic enzymes, pectin lyase is the most important in depolymerization of pectin, since it cleaves internal glycosidic bonds of highly methylated pectins. Favors pectate, the anion, over pectin, the methyl ester. This Aspergillus flavus (strain ATCC 200026 / FGSC A1120 / IAM 13836 / NRRL 3357 / JCM 12722 / SRRC 167) protein is Probable pectate lyase C (plyC).